The sequence spans 66 residues: Large ribosomal subunit protein uL29 (66 aa).

Belongs to the universal ribosomal protein uL29 family.

In Rhizobium meliloti (strain 1021) (Ensifer meliloti), this protein is Large ribosomal subunit protein uL29.